Consider the following 462-residue polypeptide: Argininosuccinate lyase (462 aa).

It belongs to the lyase 1 family. Argininosuccinate lyase subfamily.

It is found in the cytoplasm. It catalyses the reaction 2-(N(omega)-L-arginino)succinate = fumarate + L-arginine. Its pathway is amino-acid biosynthesis; L-arginine biosynthesis; L-arginine from L-ornithine and carbamoyl phosphate: step 3/3. This chain is Argininosuccinate lyase, found in Streptococcus agalactiae serotype III (strain NEM316).